The following is a 179-amino-acid chain: Protein GrpE (179 aa).

It belongs to the GrpE family. Homodimer.

The protein resides in the cytoplasm. In terms of biological role, participates actively in the response to hyperosmotic and heat shock by preventing the aggregation of stress-denatured proteins, in association with DnaK and GrpE. It is the nucleotide exchange factor for DnaK and may function as a thermosensor. Unfolded proteins bind initially to DnaJ; upon interaction with the DnaJ-bound protein, DnaK hydrolyzes its bound ATP, resulting in the formation of a stable complex. GrpE releases ADP from DnaK; ATP binding to DnaK triggers the release of the substrate protein, thus completing the reaction cycle. Several rounds of ATP-dependent interactions between DnaJ, DnaK and GrpE are required for fully efficient folding. The polypeptide is Protein GrpE (Rickettsia felis (strain ATCC VR-1525 / URRWXCal2) (Rickettsia azadi)).